A 209-amino-acid chain; its full sequence is Cytochrome bo(3) ubiquinol oxidase subunit 3 (209 aa).

At 1–29 (MSTAVLNKHLADAHEVGHDHDHAHDSGGN) the chain is on the cytoplasmic side. Residues 30-50 (TVFGFWLYLMTDCVLFASVFA) traverse the membrane as a helical segment. Over 51-72 (TYAVLVHHTAGGPSGKDIFELP) the chain is Periplasmic. A helical membrane pass occupies residues 73 to 93 (YVLVETAILLVSSCTYGLAML). Residues 94–102 (SAHKGAKGQ) are Cytoplasmic-facing. Residues 103–123 (AIAWLGVTFLLGAAFIGMEIN) form a helical membrane-spanning segment. Residues 124 to 143 (EFHHLIAEGFGPSRSAFLSS) lie on the Periplasmic side of the membrane. Residues 144 to 164 (FFTLVGMHGLHVSAGLLWMLV) form a helical membrane-spanning segment. The Cytoplasmic segment spans residues 165 to 186 (LMAQIWTRGLTAQNNTRMMCLS). The chain crosses the membrane as a helical span at residues 187 to 207 (LFWHFLDIVWICVFTVVYLMG). The Periplasmic segment spans residues 208-209 (AL).

The protein belongs to the cytochrome c oxidase subunit 3 family. In terms of assembly, heterooctamer of two A chains, two B chains, two C chains and two D chains.

The protein resides in the cell inner membrane. In terms of biological role, cytochrome bo(3) ubiquinol terminal oxidase is the component of the aerobic respiratory chain of E.coli that predominates when cells are grown at high aeration. Has proton pump activity across the membrane in addition to electron transfer, pumping 2 protons/electron. This chain is Cytochrome bo(3) ubiquinol oxidase subunit 3 (cyoC), found in Pseudomonas aeruginosa (strain ATCC 15692 / DSM 22644 / CIP 104116 / JCM 14847 / LMG 12228 / 1C / PRS 101 / PAO1).